Reading from the N-terminus, the 511-residue chain is Protein phosphatase 2C 16 (511 aa).

Residues 1-22 (MEEMTPAVAMTLSLAANTMCES) form the signal peptide. The 313-residue stretch at 189–501 (LWGTVSIQGN…DNISIIVIDL (313 aa)) folds into the PPM-type phosphatase domain. 4 residues coordinate Mn(2+): aspartate 243, glycine 244, aspartate 432, and aspartate 492.

The protein belongs to the PP2C family. Interacts with SWI3B (via N-terminus). Interacts with ABA-bounded PYR1, PYL1, PYL2, PYL3, PYL4, PYL5, PYL6, PYL8 and PYL9, and with free PYL2, PYL3, PYL4, PYL10 and PYL13. Requires Mg(2+) as cofactor. Mn(2+) serves as cofactor. As to expression, expressed in seeds, roots, stems, leaves and flowers, especially in meristematic tissues, guard cells, embryo and siliques.

It localises to the cytoplasm. The protein localises to the nucleus. The catalysed reaction is O-phospho-L-seryl-[protein] + H2O = L-seryl-[protein] + phosphate. It catalyses the reaction O-phospho-L-threonyl-[protein] + H2O = L-threonyl-[protein] + phosphate. Repressed by PYR/PYL/RCAR ABA receptors in an ABA-dependent manner. Functionally, key component and repressor of the abscisic acid (ABA) signaling pathway that regulates numerous ABA responses, such as stomatal closure, seed germination and inhibition of vegetative growth. Confers enhanced sensitivity to drought. The polypeptide is Protein phosphatase 2C 16 (HAB1) (Arabidopsis thaliana (Mouse-ear cress)).